The primary structure comprises 399 residues: Glucosamine kinase (399 aa).

Residues K98, 149–151 (EYL), and D156 each bind ATP. Residue D262 coordinates D-glucosamine. Mg(2+)-binding residues include Q267, D279, and D281. The short motif at 366 to 381 (QVLREIIYAARHLPRW) is the Substrate specificity determinant motif element. E370 contributes to the D-glucosamine binding site.

The protein belongs to the actinobacterial glucosamine kinase family. As to quaternary structure, monomer. It depends on Mg(2+) as a cofactor.

The enzyme catalyses D-glucosamine + ATP = D-glucosamine 6-phosphate + ADP + H(+). Catalyzes the ATP-dependent phosphorylation of D-glucosamine (GlcN) to D-glucosamine 6-phosphate. May be involved in the phosphorylation of acquired extracellular GlcN derived from the hydrolysis of chitosan, i.e., in the incorporation of exogenous GlcN into the bacterial GlcNAc metabolism. Is unable to phosphorylate maltose. The polypeptide is Glucosamine kinase (Mycolicibacterium smegmatis (strain ATCC 700084 / mc(2)155) (Mycobacterium smegmatis)).